We begin with the raw amino-acid sequence, 230 residues long: MKIGIIGAMEPEVAHLVESMENPSSTTIAGIEFVAGQLAGKDVVVTRSGIGKVTASIATTLLIEKYAPDAIINTGSAGGFADELAIGDIVISSEVRHHDVDVTAFGYEIGQMAQQPAAFIPDTALVTAAQKAVASLGEVKAIEGLICTGDSFICDPVRTKTMLEHFPTMAACEMEGAAIAQVCHQFDVPFVVIRSLSDNANNDSPVDFDEYLVKAGHHSALMVIALLEQL.

E12 functions as the Proton acceptor in the catalytic mechanism. Residues G78, I153, and 174–175 (ME) each bind substrate. The Proton donor role is filled by D198.

This sequence belongs to the PNP/UDP phosphorylase family. MtnN subfamily.

It catalyses the reaction S-adenosyl-L-homocysteine + H2O = S-(5-deoxy-D-ribos-5-yl)-L-homocysteine + adenine. The enzyme catalyses S-methyl-5'-thioadenosine + H2O = 5-(methylsulfanyl)-D-ribose + adenine. The catalysed reaction is 5'-deoxyadenosine + H2O = 5-deoxy-D-ribose + adenine. Its pathway is amino-acid biosynthesis; L-methionine biosynthesis via salvage pathway; S-methyl-5-thio-alpha-D-ribose 1-phosphate from S-methyl-5'-thioadenosine (hydrolase route): step 1/2. Catalyzes the irreversible cleavage of the glycosidic bond in both 5'-methylthioadenosine (MTA) and S-adenosylhomocysteine (SAH/AdoHcy) to adenine and the corresponding thioribose, 5'-methylthioribose and S-ribosylhomocysteine, respectively. Also cleaves 5'-deoxyadenosine, a toxic by-product of radical S-adenosylmethionine (SAM) enzymes, into 5-deoxyribose and adenine. The polypeptide is 5'-methylthioadenosine/S-adenosylhomocysteine nucleosidase (Shewanella sediminis (strain HAW-EB3)).